The following is a 508-amino-acid chain: Putative inorganic phosphate transporter 1-13 (508 aa).

At Met1–His22 the chain is on the cytoplasmic side. Residues Phe23–Ile43 form a helical membrane-spanning segment. Residues Ser44 to His64 lie on the Extracellular side of the membrane. A helical transmembrane segment spans residues Ala65 to Leu85. Residues Gly86 to Arg93 are Cytoplasmic-facing. A helical membrane pass occupies residues Val94–Ser114. The Extracellular portion of the chain corresponds to Lys115–Glu117. The helical transmembrane segment at Gly118–Gly138 threads the bilayer. At Asp139–Phe159 the chain is on the cytoplasmic side. The helical transmembrane segment at Ile160–Ile180 threads the bilayer. The Extracellular portion of the chain corresponds to Val181–Lys192. A helical transmembrane segment spans residues Ile193 to His213. The Cytoplasmic portion of the chain corresponds to Trp214–His277. Residues Leu278 to Phe298 form a helical membrane-spanning segment. Residues Met299–Ala328 are Extracellular-facing. The helical transmembrane segment at Val329 to Val349 threads the bilayer. The Cytoplasmic segment spans residues Asp350 to Arg354. The helical transmembrane segment at Val355 to Pro375 threads the bilayer. Residues Tyr376–Ala389 lie on the Extracellular side of the membrane. Residues Val390 to Ile410 traverse the membrane as a helical segment. At Pro411 to His424 the chain is on the cytoplasmic side. The chain crosses the membrane as a helical span at residues Gly425 to Thr445. The Extracellular segment spans residues Glu446–Arg450. The chain crosses the membrane as a helical span at residues Ile451–Pro471. Over Glu472–Leu508 the chain is Cytoplasmic.

This sequence belongs to the major facilitator superfamily. Phosphate:H(+) symporter (TC 2.A.1.9) family.

The protein localises to the membrane. High-affinity transporter for external inorganic phosphate. This is Putative inorganic phosphate transporter 1-13 (PHT1-13) from Oryza sativa subsp. japonica (Rice).